The primary structure comprises 409 residues: Nucleoprotein (409 aa).

4 disordered regions span residues 1–32 (MASG…SSGN), 46–68 (IPPP…SQQH), 164–196 (RSGR…EDDL), and 238–258 (VDQV…DDKM). The segment covering 15–31 (PVIKLGGPKPPKVGSSG) has biased composition (low complexity). The RNA-binding stretch occupies residues 29-160 (SSGNASWFQA…GNFRWDFIPL (132 aa)). Positions 31–156 (GNASWFQAIK…GGPDGNFRWD (126 aa)) constitute a CoV N NTD domain. The span at 166–179 (GRSTAASSAASSRA) shows a compositional bias: low complexity. Composition is skewed to basic and acidic residues over residues 180–192 (PSRE…RSGS) and 247–258 (KGKEGNFGDDKM). 2 positions are modified to phosphoserine; by host: S190 and S192. The CoV N CTD domain occupies 215–331 (TKAKADEMAH…QCVDGVGTRP (117 aa)). The tract at residues 226–333 (RYCKRTIPPN…VDGVGTRPKD (108 aa)) is dimerization. C320 and C323 are oxidised to a cystine. The segment at 326–409 (GVGTRPKDDE…GDAALGENEL (84 aa)) is disordered. The span at 358 to 367 (QRPKKEKKPK) shows a compositional bias: basic residues. Basic and acidic residues predominate over residues 368-384 (KHDDEVDKALTSDEERN). T378 bears the Phosphothreonine; by host mark. At S379 the chain carries Phosphoserine; by host.

The protein belongs to the gammacoronavirus nucleocapsid protein family. Homooligomer. Both monomeric and oligomeric forms interact with RNA. Interacts with protein M. Interacts with NSP3; this interaction serves to tether the genome to the newly translated replicase-transcriptase complex at a very early stage of infection. Post-translationally, ADP-ribosylated. The ADP-ribosylation is retained in the virion during infection. In terms of processing, phosphorylated on serine and threonine residues.

The protein resides in the virion. It is found in the host endoplasmic reticulum-Golgi intermediate compartment. The protein localises to the host Golgi apparatus. Functionally, packages the positive strand viral genome RNA into a helical ribonucleocapsid (RNP) and plays a fundamental role during virion assembly through its interactions with the viral genome and membrane protein M. Plays an important role in enhancing the efficiency of subgenomic viral RNA transcription as well as viral replication. This Avian infectious bronchitis virus (strain M41) (IBV) protein is Nucleoprotein.